A 181-amino-acid polypeptide reads, in one-letter code: Large ribosomal subunit protein uL10 (181 aa).

The protein belongs to the universal ribosomal protein uL10 family. In terms of assembly, part of the ribosomal stalk of the 50S ribosomal subunit. The N-terminus interacts with L11 and the large rRNA to form the base of the stalk. The C-terminus forms an elongated spine to which L12 dimers bind in a sequential fashion forming a multimeric L10(L12)X complex.

Functionally, forms part of the ribosomal stalk, playing a central role in the interaction of the ribosome with GTP-bound translation factors. In Fervidobacterium nodosum (strain ATCC 35602 / DSM 5306 / Rt17-B1), this protein is Large ribosomal subunit protein uL10.